The primary structure comprises 217 residues: Probable transaldolase (217 aa).

Catalysis depends on Lys-83, which acts as the Schiff-base intermediate with substrate.

Belongs to the transaldolase family. Type 3B subfamily.

The protein resides in the cytoplasm. The catalysed reaction is D-sedoheptulose 7-phosphate + D-glyceraldehyde 3-phosphate = D-erythrose 4-phosphate + beta-D-fructose 6-phosphate. It participates in carbohydrate degradation; pentose phosphate pathway; D-glyceraldehyde 3-phosphate and beta-D-fructose 6-phosphate from D-ribose 5-phosphate and D-xylulose 5-phosphate (non-oxidative stage): step 2/3. Functionally, transaldolase is important for the balance of metabolites in the pentose-phosphate pathway. This chain is Probable transaldolase, found in Caulobacter vibrioides (strain NA1000 / CB15N) (Caulobacter crescentus).